We begin with the raw amino-acid sequence, 473 residues long: Lactate utilization protein B 2 (473 aa).

4Fe-4S ferredoxin-type domains are found at residues 302–332 and 351–380; these read GSEF…GHSY and YDDY…LHDL. [4Fe-4S] cluster is bound by residues cysteine 311, cysteine 314, cysteine 317, cysteine 321, cysteine 364, cysteine 367, and cysteine 371.

Belongs to the LutB/YkgF family.

Is involved in L-lactate degradation and allows cells to grow with lactate as the sole carbon source. Has probably a role as an electron transporter during oxidation of L-lactate. This chain is Lactate utilization protein B 2, found in Bacillus mycoides (strain KBAB4) (Bacillus weihenstephanensis).